A 2339-amino-acid chain; its full sequence is MGIKLRRLTAGICLITQLAFPMAAAAQGVVNAATQQPVPAQIAIANANTVPYTLGALESAQSVAERFGISVAELRKLNQFRTFARGFDNVRQGDELDVPAQVSEKKLTPPPGNSSDNLEQQIASTSQQIGSLLAEDMNSEQAANMARGWASSQASGAMTDWLSRFGTARITLGVDEDFSLKNSQFDFLHPWYETPDNLFFSQHTLHRTDERTQINNGLGWRHFTPTWMSGINFFFDHDLSRYHSRAGIGAEYWRDYLKLSSNGYLRLTNWRSAPELDNDYEARPANGWDVRAESWLPAWPHLGGKLVYEQYYGDEVALFDKDDRQSNPHAITAGLNYTPFPLMTFSAEQRQGKQGENDTRFAVDFTWQPGSAMQKQLDPNEVAARRSLAGSRYDLVDRNNNIVLEYRKKELVRLTLTDPVTGKSGEVKSLVSSLQTKYALKGYNVEATALEAAGGKVVTTGKDILVTLPAYRFTSTPETDNTWPIEVTAEDVKGNLSNREQSMVVVQAPTLSQKDSSVSLSTQTLNADSHSTATLTFIAHDAAGNPVVGLVLSTRHEGVQDITLSDWKDNGDGSYTQILTTGAMSGTLTLMPQLNGVDAAKAPAVVNIISVSSSRTHSSIKIDKDRYLSGNPIEVTVELRDENDKPVKEQKQQLNNAVSIDNVKPGVTTDWKETADGVYKATYTAYTKGSGLTAKLLMQNWNEDLHTAGFIIDANPQSAKIATLSASNNGVLANENAANTVSVNVADEGSNPINDHTVTFAVLSGSATSFNNQNTAKTDVNGLATFDLKSSKQEDNTVEVTLENGVKQTLIVSFVGDSSTAQVDLQKSKNEVVADGNDSVTMTATVRDAKGNLLNDVMVTFNVNSAEAKLSQTEVNSHDGIATATLTSLKNGDYRVTASVSSGSQANQQVNFIGDQSTAALTLSVPSGDITVTNTAPQYMTATLQDKNGNPLKDKEITFSVPNDVASKFSISNGGKGMTDSNGVAIASLTGTLAGTHMIMARLANSNVSDAQPMTFVADKDRAVVVLQTSKAEIIGNGVDETTLTATVKDPSNHPVAGITVNFTMPQDVAANFTLENNGIAITQANGEAHVTLKGKKAGTHTVTATLGNNNTSDSQPVTFVADKASAQVVLQISKDEITGNGVDSATLTATVKDQFDNEVNNLPVTFSSASSGLTLTPGVSNTNESGIAQATLAGVAFGEKTVTASLANNGASDNKTVHFIGDTAAAKIIELAPVPDSIIAGTPQNSSGSVITATVVDNNGFPVKGVTVNFTSNAATAEMTNGGQAVTNEQGKATVTYTNTRSSIESGARPDTVEASLENGSSTLSTSINVNADASTAHLTLLQALFDTVSAGETTSLYIEVKDNYGNGVPQQEVTLSVSPSEGVTPSNNAIYTTNHDGNFYASFTATKAGVYQLTATLENGDSMQQTVTYVPNVANAEITLAASKDPVIADNNDLTTLTATVADTEGNAIANTEVTFTLPEDVKANFTLSDGGKVITDAEGKAKVTLKGTKAGAHTVTASMTGGKSEQLVVNFIADTLTAQVNLNVTEDNFIANNVGMTRLQATVTDGNGNPLANEAVTFTLPADVSASFTLGQGGSAITDINGKAEVTLSGTKSGTYPVTVSVNNYGVSDTKQVTLIADAGTAKLASLTSVYSFVVSTTEGATMTASVTDANGNPVEGIKVNFRGTSVTLSSTSVETDDRGFAEILVTSTEVGLKTVSASLADKPTEVISRLLNASADVNSATITSLEIPEGQVMVAQDVAVKAHVNDQFGNPVAHQPVTFSAEPSSQMIISQNTVSTNTQGVAEVTMTPERNGSYMVKASLPNGASLEKQLEAIDEKLTLTASSPLIGVYAPTGATLTATLTSANGTPVEGQVINFSVTPEGATLSGGKVRTNSSGQAPVVLTSNKVGTYTVTASFHNGVTIQTQTTVKVTGNSSTAHVASFIADPSTIAATNTDLSTLKATVEDGSGNLIEGLTVYFALKSGSATLTSLTAVTDQNGIATTSVKGAMTGSVTVSAVTTAGGMQTVDITLVAGPADTSQSVLKSNRSSLKGDYTDSAELRLVLHDISGNPIKVSEGMEFVQSGTNVPYIKISAIDYSLNINGDYKATVTGGGEGIATLIPVLNGVHQAGLSTTIQFTRAEDKIMSGTVSVNGTDLPTTTFPSQGFTGAYYQLNNDNFAPGKTAADYEFSSSASWVDVDATGKVTFKNVGSNSERITATPKSGGPSYVYEIRVKSWWVNAGEAFMIYSLAENFCSSNGYTLPRANYLNHCSSRGIGSLYSEWGDMGHYTTDAGFQSNMYWSSSPANSSEQYVVSLATGDQSVFEKLGFAYATCYKNL.

A signal peptide spans 1 to 26; the sequence is MGIKLRRLTAGICLITQLAFPMAAAA. A LysM domain is found at 50-98; that stretch reads VPYTLGALESAQSVAERFGISVAELRKLNQFRTFARGFDNVRQGDELDV. Residues 125–400 form an inverse autotransporter region; sequence TSQQIGSLLA…SRYDLVDRNN (276 aa). Residues 513-605 form an invasin 3 domain region; it reads QKDSSVSLST…GVDAAKAPAV (93 aa). Big-1 domains lie at 721–815, 822–913, 920–1017, 1024–1121, 1128–1221, 1229–1331, 1339–1432, 1439–1535, 1542–1639, 1646–1730, 1746–1837, 1840–1934, and 1942–2034; these read IATL…VSFV, QVDL…VNFI, ALTL…MTFV, VVVL…VTFV, QVVL…VHFI, IIEL…SINV, HLTL…VTYV, EITL…VNFI, QVNL…VTLI, KLAS…PTEV, ITSL…LEAI, KLTL…VKVT, and VASF…ITLV. A C-type lectin domain region spans residues 2236-2339; that stretch reads KSWWVNAGEA…FAYATCYKNL (104 aa).

It belongs to the intimin/invasin family.

Its subcellular location is the cell outer membrane. A cryptic inverse autotransporter, it is not expressed in wild-type strain MG1655. Upon overexpression shows increased adherence to polyvinyl chloride (PVC) plates and increased mature biofilm formation. Probably binds peptidoglycan. This Escherichia coli (strain K12) protein is Inverse autotransporter adhesin YeeJ (yeeJ).